Consider the following 239-residue polypeptide: Large ribosomal subunit protein uL2 (239 aa).

The segment at glycine 205 to arginine 224 is disordered.

Belongs to the universal ribosomal protein uL2 family. As to quaternary structure, part of the 50S ribosomal subunit. Forms a bridge to the 30S subunit in the 70S ribosome.

Its function is as follows. One of the primary rRNA binding proteins. Required for association of the 30S and 50S subunits to form the 70S ribosome, for tRNA binding and peptide bond formation. It has been suggested to have peptidyltransferase activity; this is somewhat controversial. Makes several contacts with the 16S rRNA in the 70S ribosome. The polypeptide is Large ribosomal subunit protein uL2 (Methanoculleus marisnigri (strain ATCC 35101 / DSM 1498 / JR1)).